We begin with the raw amino-acid sequence, 128 residues long: Small ribosomal subunit protein uS8c (128 aa).

This sequence belongs to the universal ribosomal protein uS8 family. Part of the 30S ribosomal subunit.

It localises to the plastid. It is found in the chloroplast. One of the primary rRNA binding proteins, it binds directly to 16S rRNA central domain where it helps coordinate assembly of the platform of the 30S subunit. The protein is Small ribosomal subunit protein uS8c (rps8) of Welwitschia mirabilis (Tree tumbo).